A 355-amino-acid polypeptide reads, in one-letter code: Nuclear speckle splicing regulatory protein 1 homolog (355 aa).

The tract at residues 1 to 57 is disordered; the sequence is MSGTGFRYGLNVMKKKKPNESSNRITFTEDDSSSSEQEHAPIPNSFSSQITAASDAS. Over residues 44 to 54 the composition is skewed to polar residues; that stretch reads NSFSSQITAAS. A coiled-coil region spans residues 99–162; the sequence is MENLIESAKK…EDRKEEDEKS (64 aa). 2 disordered regions span residues 253–292 and 325–355; these read SANN…HGTY and KIHA…ATNP. Positions 280 to 289 are enriched in basic and acidic residues; the sequence is YHQDRPDKRH. Residues 293–326 are a coiled coil; the sequence is SLEEIDKQRKEFENRQRLQKEKEFQKSREAALKI. Over residues 329 to 339 the composition is skewed to polar residues; the sequence is SRNTTETQVQS. The segment covering 346–355 has biased composition (basic residues); the sequence is QRKKKAATNP.

This sequence belongs to the NSRP1 family.

This Schizosaccharomyces pombe (strain 972 / ATCC 24843) (Fission yeast) protein is Nuclear speckle splicing regulatory protein 1 homolog.